Reading from the N-terminus, the 61-residue chain is Short neurotoxin 1 (61 aa).

Positions 1-16 (MECHNQQSSQPPTTKT) are enriched in polar residues. The disordered stretch occupies residues 1 to 20 (MECHNQQSSQPPTTKTCPGE). Intrachain disulfides connect Cys-3-Cys-23, Cys-17-Cys-40, Cys-42-Cys-53, and Cys-54-Cys-59.

This sequence belongs to the three-finger toxin family. Short-chain subfamily. Type I alpha-neurotoxin sub-subfamily. Expressed by the venom gland.

It is found in the secreted. Its function is as follows. Binds to muscle nicotinic acetylcholine receptor (nAChR) and inhibit acetylcholine from binding to the receptor, thereby impairing neuromuscular transmission. The sequence is that of Short neurotoxin 1 from Naja melanoleuca (Forest cobra).